Consider the following 232-residue polypeptide: 5'-methylthioadenosine/S-adenosylhomocysteine nucleosidase (232 aa).

Glu12 serves as the catalytic Proton acceptor. Substrate-binding positions include Gly78, Ile152, and 173 to 174 (ME). Catalysis depends on Asp197, which acts as the Proton donor.

The protein belongs to the PNP/UDP phosphorylase family. MtnN subfamily. As to quaternary structure, homodimer.

It catalyses the reaction S-adenosyl-L-homocysteine + H2O = S-(5-deoxy-D-ribos-5-yl)-L-homocysteine + adenine. The enzyme catalyses S-methyl-5'-thioadenosine + H2O = 5-(methylsulfanyl)-D-ribose + adenine. The catalysed reaction is 5'-deoxyadenosine + H2O = 5-deoxy-D-ribose + adenine. The protein operates within amino-acid biosynthesis; L-methionine biosynthesis via salvage pathway; S-methyl-5-thio-alpha-D-ribose 1-phosphate from S-methyl-5'-thioadenosine (hydrolase route): step 1/2. Its function is as follows. Catalyzes the irreversible cleavage of the glycosidic bond in both 5'-methylthioadenosine (MTA) and S-adenosylhomocysteine (SAH/AdoHcy) to adenine and the corresponding thioribose, 5'-methylthioribose and S-ribosylhomocysteine, respectively. Also cleaves 5'-deoxyadenosine, a toxic by-product of radical S-adenosylmethionine (SAM) enzymes, into 5-deoxyribose and adenine. Thus, is required for in vivo function of the radical SAM enzymes biotin synthase and lipoic acid synthase, that are inhibited by 5'-deoxyadenosine accumulation. This chain is 5'-methylthioadenosine/S-adenosylhomocysteine nucleosidase, found in Escherichia coli O7:K1 (strain IAI39 / ExPEC).